The primary structure comprises 236 residues: Ribose-5-phosphate isomerase A (236 aa).

Residues threonine 31–threonine 34, aspartate 84–aspartate 87, and lysine 97–glycine 100 contribute to the substrate site. Glutamate 106 serves as the catalytic Proton acceptor. Lysine 124 serves as a coordination point for substrate.

The protein belongs to the ribose 5-phosphate isomerase family. Homodimer.

It catalyses the reaction aldehydo-D-ribose 5-phosphate = D-ribulose 5-phosphate. Its pathway is carbohydrate degradation; pentose phosphate pathway; D-ribose 5-phosphate from D-ribulose 5-phosphate (non-oxidative stage): step 1/1. Its function is as follows. Catalyzes the reversible conversion of ribose-5-phosphate to ribulose 5-phosphate. In Polynucleobacter asymbioticus (strain DSM 18221 / CIP 109841 / QLW-P1DMWA-1) (Polynucleobacter necessarius subsp. asymbioticus), this protein is Ribose-5-phosphate isomerase A.